Reading from the N-terminus, the 551-residue chain is Bestrophin-1 (551 aa).

At Met-1 to Leu-31 the chain is on the cytoplasmic side. Position 10 (Ala-10) interacts with Ca(2+). Residues Leu-32–Arg-51 traverse the membrane as a helical segment. Residues Met-52 to Leu-60 lie on the Extracellular side of the membrane. Residues Leu-61–Leu-82 traverse the membrane as a helical segment. Residues Gly-83–Thr-237 are Cytoplasmic-facing. A helical membrane pass occupies residues Gln-238–Arg-255. Topologically, residues Gln-256–Pro-274 are extracellular. The helical transmembrane segment at Val-275 to Leu-288 threads the bilayer. The Cytoplasmic segment spans residues Lys-289–Glu-551. 4 residues coordinate Ca(2+): Gln-293, Asn-296, Asp-301, and Asp-304. Residues Pro-346–Glu-379 are auto-inhibitory segment. Positions Ser-459–Tyr-489 are disordered. The span at Ala-465–Ala-475 shows a compositional bias: polar residues. The span at Pro-476–Asp-488 shows a compositional bias: low complexity.

Belongs to the anion channel-forming bestrophin (TC 1.A.46) family. Calcium-sensitive chloride channel subfamily. Interacts with YWHAG; this interaction promotes the ligand-gated L-glutamate channel activity leading to the positive regulation of NMDA glutamate receptor activity through the L-glutamate secretion.

The protein localises to the cell membrane. The protein resides in the basolateral cell membrane. It catalyses the reaction 4-aminobutanoate(in) = 4-aminobutanoate(out). The catalysed reaction is L-glutamate(out) = L-glutamate(in). The enzyme catalyses chloride(in) = chloride(out). It carries out the reaction hydrogencarbonate(in) = hydrogencarbonate(out). It catalyses the reaction D-serine(in) = D-serine(out). With respect to regulation, inactivated by sulfhydryl-reactive agents. Ligand-gated anion channel that allows the movement of anions across cell membranes when activated by calcium (Ca2+). Allows the movement of chloride and hydrogencarbonate. Found in a partially open conformation leading to significantly smaller chloride movement. Upon F2R/PAR-1 activation, the sequestered calcium is released into the cytosol of astrocytes, leading to the (Ca2+)-dependent release of L-glutamate into the synaptic cleft that targets the neuronal postsynaptic GRIN2A/NMDAR receptor resulting in the synaptic plasticity regulation. Upon activation of the norepinephrine-alpha-1 adrenergic receptor signaling pathway, transports as well D-serine than L-glutamate in a (Ca2+)-dependent manner, leading to activation of adjacent NMDAR receptors and therefore regulates the heterosynaptic long-term depression and metaplasticity during initial memory acquisition. Releases the 4-aminobutanoate neurotransmitter in a (Ca2+)-dependent manner, and participates in its tonic release from cerebellar glial cells. This is Bestrophin-1 from Mus musculus (Mouse).